The chain runs to 211 residues: Mitotic spindle assembly checkpoint protein MAD2B (211 aa).

An HORMA domain is found at 13 to 203; it reads QVVADVLSEF…SDILKMQLYV (191 aa).

Homooligomer. Interacts with REV1. Interacts with FZR1 (in complex with the anaphase promoting complex APC). May interact with CDC20. Heterodimer with REV3L. This dimer forms the minimal DNA polymerase zeta complex (Pol-zeta2), with REV3L bearing DNA polymerase catalytic activity, although its activity is very low in this context. Component of the tetrameric Pol-zeta complex (Pol-zeta4), which consists of REV3L, MAD2L2, POLD2 and POLD3; Pol-zeta4 is the fully active form of DNA polymerase zeta. Component of the shieldin complex, consisting of SHLD1, SHLD2, SHLD3 and MAD2L2/REV7. Within the complex, SHLD2 forms a scaffold which interacts with a SHLD3-MAD2L2 subcomplex via its N-terminus, and with SHLD1 via its C-terminus.

It is found in the nucleus. It localises to the cytoplasm. The protein resides in the cytoskeleton. The protein localises to the spindle. Its subcellular location is the chromosome. Functionally, adapter protein able to interact with different proteins and involved in different biological processes. Mediates the interaction between the error-prone DNA polymerase zeta catalytic subunit REV3L and the inserter polymerase REV1, thereby mediating the second polymerase switching in translesion DNA synthesis. Translesion DNA synthesis releases the replication blockade of replicative polymerases, stalled in presence of DNA lesions. May also play a role in signal transduction in response to DNA damage. May regulate the activation of the anaphase promoting complex APC thereby regulating progression through the cell cycle. Component of the shieldin complex, which plays an important role in repair of DNA double-stranded breaks (DSBs). During G1 and S phase of the cell cycle, the complex functions downstream of TP53BP1 to promote non-homologous end joining (NHEJ) and suppress DNA end resection. Through transcriptional regulation may play a role in epithelial-mesenchymal transdifferentiation. In Gallus gallus (Chicken), this protein is Mitotic spindle assembly checkpoint protein MAD2B (MAD2L2).